The chain runs to 147 residues: Large ribosomal subunit protein uL15 (147 aa).

Residues 1 to 11 (MKLHDLRPAKD) are compositionally biased toward basic and acidic residues. The disordered stretch occupies residues 1 to 57 (MKLHDLRPAKDAKKKRKRVGRGTGSGRGFTSGRGSKGQNARSGGGVRPTFEGGQTPL). The segment covering 21 to 35 (RGTGSGRGFTSGRGS) has biased composition (gly residues).

This sequence belongs to the universal ribosomal protein uL15 family. As to quaternary structure, part of the 50S ribosomal subunit.

In terms of biological role, binds to the 23S rRNA. The chain is Large ribosomal subunit protein uL15 from Halothermothrix orenii (strain H 168 / OCM 544 / DSM 9562).